We begin with the raw amino-acid sequence, 433 residues long: Probable mannose-6-phosphate isomerase (433 aa).

Zn(2+)-binding residues include glutamine 103, histidine 105, glutamate 130, and histidine 277. Residue arginine 296 is part of the active site.

The protein belongs to the mannose-6-phosphate isomerase type 1 family. Requires Zn(2+) as cofactor.

It localises to the cytoplasm. It carries out the reaction D-mannose 6-phosphate = D-fructose 6-phosphate. The protein operates within nucleotide-sugar biosynthesis; GDP-alpha-D-mannose biosynthesis; alpha-D-mannose 1-phosphate from D-fructose 6-phosphate: step 1/2. Functionally, involved in the synthesis of the GDP-mannose and dolichol-phosphate-mannose required for a number of critical mannosyl transfer reactions. In Echinococcus multilocularis (Fox tapeworm), this protein is Probable mannose-6-phosphate isomerase (PMIH).